We begin with the raw amino-acid sequence, 80 residues long: Cell division activator CedA (80 aa).

This sequence belongs to the CedA family.

Functionally, activates the cell division inhibited by chromosomal DNA over-replication. This is Cell division activator CedA from Citrobacter koseri (strain ATCC BAA-895 / CDC 4225-83 / SGSC4696).